The chain runs to 880 residues: Potassium/sodium hyperpolarization-activated cyclic nucleotide-gated channel 1 (880 aa).

Residues 1-80 (MEGGGKPNSS…SAGGLEDAEG (80 aa)) form a disordered region. At 1–136 (MEGGGKPNSS…WIIHSYSDFR (136 aa)) the chain is on the cytoplasmic side. Residues 8–34 (NSSSNSRDDGNSVFPAKAPATGAGPAA) are compositionally biased toward low complexity. Residues 62–71 (DGGGGGGEES) show a composition bias toward gly residues. A helical membrane pass occupies residues 137–158 (FYWDLIMLIMMVGNLVIIPVGI). At 159 to 167 (TFFTEQTTT) the chain is on the extracellular side. A helical transmembrane segment spans residues 168–188 (PWIIFNVASDTVFLLDLIMNF). The Cytoplasmic portion of the chain corresponds to 189 to 209 (RTGTVNEDSSEIILDPKVIKM). A helical transmembrane segment spans residues 210–230 (NYLKSWFVVDFISSIPVDYIF). Residues 231-254 (LIVEKGMDSEVYKTARALRIVRFT) are Extracellular-facing. Residues 255–275 (KILSLLRLLRLSRLIRYIHQW) form a helical; Voltage-sensor membrane-spanning segment. Residues 276–289 (EEIFHMTYDLASAV) are Cytoplasmic-facing. A helical transmembrane segment spans residues 290-312 (VRIFNLIGMMLLLCHWDGCLQFL). Topologically, residues 313–338 (VPLLQDFPPDCWVSLNEMVNDSWGKQ) are extracellular. N-linked (GlcNAc...) asparagine glycosylation is present at Asn332. An intramembrane region (pore-forming) is located at residues 339–360 (YSYALFKAMSHMLCIGYGAQAP). A Selectivity filter motif is present at residues 352–356 (CIGYG). The Extracellular portion of the chain corresponds to 361–365 (VSMSD). Residues 366–386 (LWITMLSMIVGATCYAMFVGH) form a helical membrane-spanning segment. At 387-880 (ATALIQSLDS…AEKPRFASNL (494 aa)) the chain is on the cytoplasmic side. Residues Gly533, Glu534, Cys536, Arg543, Thr544, Arg584, and Arg587 each contribute to the 3',5'-cyclic AMP site. Positions 641–664 (LNSTSSTATPTSRMRTQSPPVYTA) are enriched in polar residues. 3 disordered regions span residues 641-686 (LNST…QPSA), 718-786 (ASQL…LPHE), and 835-880 (MSSG…ASNL). Low complexity-rich tracts occupy residues 665 to 685 (TSLS…PQPS) and 725 to 738 (PQQQ…QTQP). Polar residues predominate over residues 760 to 770 (STQALPNTSLT). The segment covering 844 to 855 (RGVPPAPPPPAA) has biased composition (pro residues). Residues 870-880 (EAEKPRFASNL) show a composition bias toward basic and acidic residues.

This sequence belongs to the potassium channel HCN family. Homotetramer. Heterotetramer with HCN2. The potassium channel is composed of a homo- or heterotetrameric complex of pore-forming subunits. Interacts with KCNE2. Interacts with the SH3 domain of CSK. Detected in myocytes in heart sinoatrial node (SAN) and in brain, in particular in the granule cell layer and in Purkinje neuron bodies in the cerebellum.

Its subcellular location is the cell membrane. The enzyme catalyses Na(+)(in) = Na(+)(out). It carries out the reaction K(+)(in) = K(+)(out). With respect to regulation, activated by cAMP. cAMP binding promotes tetramerization and formation of an active channel. Compared to other family members, cAMP has less stimulatory effect on HCN1 because part of the molecules already contain bound cAMP and form homotetramers when cAMP levels are low, this inherent tetramerization in HCN1 results in a weaker response to increased cAMP. Functionally, hyperpolarization-activated ion channel that are permeable to sodium and potassium ions. Exhibits weak selectivity for potassium over sodium ions. Contributes to the native pacemaker currents in heart (If) and in neurons (Ih). Participates in cerebellar mechanisms of motor learning. May mediate responses to sour stimuli. In Oryctolagus cuniculus (Rabbit), this protein is Potassium/sodium hyperpolarization-activated cyclic nucleotide-gated channel 1 (HCN1).